The primary structure comprises 466 residues: Alpha-1A adrenergic receptor (466 aa).

Residues 1–27 (MVLLSENASEGSNCTHPPAPVNISKAI) are Extracellular-facing. 3 N-linked (GlcNAc...) asparagine glycosylation sites follow: Asn-7, Asn-13, and Asn-22. The helical transmembrane segment at 28 to 51 (LLGVILGGLIIFGVLGNILVILSV) threads the bilayer. At 52-64 (ACHRHLHSVTHYY) the chain is on the cytoplasmic side. Residues 65–88 (IVNLAVADLLLTSTVLPFSAIFEI) traverse the membrane as a helical segment. Topologically, residues 89 to 99 (LGYWAFGRVFC) are extracellular. Cys-99 and Cys-176 are disulfide-bonded. Residues 100–122 (NIWAAVDVLCCTASIMGLCIISI) form a helical membrane-spanning segment. Over 123 to 143 (DRYIGVSYPLRYPTIVTQRRG) the chain is Cytoplasmic. A helical membrane pass occupies residues 144-167 (VRALLCVWVLSLVISIGPLFGWRQ). Topologically, residues 168 to 181 (PAPEDETICQINEE) are extracellular. Residues 182-205 (PGYVLFSALGSFYVPLAIILVMYC) traverse the membrane as a helical segment. The Cytoplasmic portion of the chain corresponds to 206 to 273 (RVYVVAKRES…FSREKKAAKT (68 aa)). Phosphoserine; by PKA is present on Ser-215. The chain crosses the membrane as a helical span at residues 274–297 (LGIVVGCFVLCWLPFFLVMPIGSF). Residues 298–305 (FPDFKPSE) are Extracellular-facing. A helical transmembrane segment spans residues 306–329 (TVFKIVFWLGYLNSCINPIIYPCS). Topologically, residues 330-466 (SQEFKKAFQN…ISLGENGEEV (137 aa)) are cytoplasmic. Positions 334–349 (KKAFQNVLRIQCLRRR) match the Nuclear localization signal motif. Cys-345 carries the S-palmitoyl cysteine lipid modification.

The protein belongs to the G-protein coupled receptor 1 family. Adrenergic receptor subfamily. ADRA1A sub-subfamily. In terms of assembly, homo- and heterooligomer. Heterooligomerizes with ADRA1B homooligomers in cardiac myocytes. Interacts with CAVIN4. Post-translationally, C-terminal Ser or Thr residues may be phosphorylated. In terms of tissue distribution, abundant in heart, brain, aorta, vena cava, vas deferens, submaxillary gland, lung, and kidney. Found at lower levels in prostate, parotid gland and skeletal muscle.

Its subcellular location is the nucleus membrane. The protein resides in the cell membrane. It localises to the cytoplasm. The protein localises to the membrane. It is found in the caveola. In terms of biological role, this alpha-adrenergic receptor mediates its action by association with G proteins that activate a phosphatidylinositol-calcium second messenger system. Its effect is mediated by G(q) and G(11) proteins. Nuclear ADRA1A-ADRA1B heterooligomers regulate phenylephrine (PE)-stimulated ERK signaling in cardiac myocytes. In Rattus norvegicus (Rat), this protein is Alpha-1A adrenergic receptor (Adra1a).